The sequence spans 562 residues: MANAEVSVPVGDVVVVPTEGNEGENPEDTKTQVILQLQPVQQGIYEAGSENSAAVVAVETHTIHKIEEGIDASSIEANEDMEIAYPITCGESKAVLLWKKFVCPGINVKCVKFNDQLISPKHFVHLAGKSTLKDWKRAIRLGGIMLRKMMDSGQIDFYQHDKVCSNTCRSTKFDLLISSARAPVPGQQTSVVQTPTSADGNITQIAISEESMEEAGLEWNSALTAAVTMATEEGIKKESEEISEDTLMFWKGIADVGLMEEVVCNIQKEIEELLRGVQQRLIHAPFQVTDAAVLNNVANTFGLMDTVKRVLDNRRKQVEHGEEQFLYTLADLERQLEEQKKQAQDPRLKSQTVQNVVLMPVSTPKPPKRPRLQRPASTTVLSPSPVQQPQFTVISPITITPVGQSFSMGNIPVATLSQGTSPVTVHTLPSGPQLFRYATVVSSAKSNSPDTVTIHPSSSLALLSSTSMQDGSTLGNMATMVSPVELVAMESGLTSAIQAVESTSEDGQTIIEIDPAPDPEADDPEGKAVILETELRTEEKVVANMEERQHQVHNVEIVVLED.

Ala-2 carries the post-translational modification N-acetylalanine. Residues 72 to 156 (ASSIEANEDM…RKMMDSGQID (85 aa)) enclose the SAND domain. Zn(2+) is bound at residue Cys-103. The DNA site is built by Lys-129, Lys-133, Lys-136, and Arg-147. Zn(2+) is bound by residues His-160, Cys-164, and Cys-168. Positions 311-357 (LDNRRKQVEHGEEQFLYTLADLERQLEEQKKQAQDPRLKSQTVQNVV) form a coiled coil. The tract at residues 360–384 (PVSTPKPPKRPRLQRPASTTVLSPS) is disordered. The segment covering 375 to 384 (PASTTVLSPS) has biased composition (polar residues).

As to quaternary structure, homodimer, and heterodimer of GMEB1 and GMEB2. Interacts with the glucocorticoid receptor (NR3C1) and NCOA2/TIF2. May interact with HSP27 and CREB-binding protein (CBP). Interacts with TRIM63.

It is found in the nucleus. The protein localises to the cytoplasm. In terms of biological role, trans-acting factor that binds to glucocorticoid modulatory elements (GME) present in the TAT (tyrosine aminotransferase) promoter and increases sensitivity to low concentrations of glucocorticoids. Also binds to the transferrin receptor promoter. This is Glucocorticoid modulatory element-binding protein 1 (Gmeb1) from Rattus norvegicus (Rat).